A 1003-amino-acid polypeptide reads, in one-letter code: Rho-associated protein kinase 1 (1003 aa).

The interval 1–28 (VAPVVPDLSSDIDTSNFDDLEEDKGEEE) is disordered. One can recognise an AGC-kinase C-terminal domain in the interval 1–58 (VAPVVPDLSSDIDTSNFDDLEEDKGEEETFPIPKAFVGNQLPFVGFTYYSNRRYLSSA). The span at 16–28 (NFDDLEEDKGEEE) shows a compositional bias: acidic residues. Positions 17 to 376 (FDDLEEDKGE…KKLKEEREAR (360 aa)) are interaction with FHOD1. The stretch at 71–341 (KSLQESLQKT…RLEQEVNEHK (271 aa)) forms a coiled coil. The REM-1 domain occupies 128–205 (STVSQIEKEK…LEEANDLLRT (78 aa)). Residue Lys296 is modified to N6-acetyllysine. The segment at 356 to 595 (EAKSVAMCEM…TVSRLEEANS (240 aa)) is SHROOM3 binding. A RhoBD domain is found at 598–664 (TKDIEILRRE…LAEIMNRKDF (67 aa)). Positions 647–659 (LKTQAVNKLAEIM) are RHOA binding. Positions 660-751 (NRKDFKIDRK…KLLDLSDSTS (92 aa)) form a coiled coil. Ser754 and Ser757 each carry phosphoserine. The interval 764–1003 (NLPESRIEGW…VVKNTSGKTR (240 aa)) is auto-inhibitory. In terms of domain architecture, PH spans 767 to 966 (ESRIEGWLSV…WVTHLVKKIP (200 aa)). The Phorbol-ester/DAG-type zinc finger occupies 877-930 (GHEFIPTLYHFPANCDACAKPLWHVFKPPPALECRRCHVKCHRDHLDKKEDLIC). The interval 968–1003 (NPPSGFVRASPRTLSTRSTANQSFRKVVKNTSGKTR) is disordered. Ser977 bears the Phosphoserine mark. The segment covering 979-1003 (RTLSTRSTANQSFRKVVKNTSGKTR) has biased composition (polar residues).

This sequence belongs to the protein kinase superfamily. AGC Ser/Thr protein kinase family. As to quaternary structure, homodimer. Interacts with RHOA (activated by GTP), RHOB, RHOC, GEM, MYLC2B, RHOE, PPP1R12A, LIMK1, LIMK2, TSG101, CHORDC1, DAPK3, PFN1, PTEN and JIP3. Interacts with ITGB1BP1 (via N-terminus and PTB domain). Interacts with FHOD1 in a Src-dependent manner. Interacts with SHROOM3. The cofactor is Mg(2+). Autophosphorylated on serine and threonine residues. Post-translationally, cleaved by caspase-3 during apoptosis. This leads to constitutive activation of the kinase and membrane blebbing.

The protein localises to the cytoplasm. It localises to the cytoskeleton. It is found in the microtubule organizing center. Its subcellular location is the centrosome. The protein resides in the centriole. The protein localises to the golgi apparatus membrane. It localises to the cell projection. It is found in the bleb. Its subcellular location is the cell membrane. The protein resides in the lamellipodium. The protein localises to the ruffle. The catalysed reaction is L-seryl-[protein] + ATP = O-phospho-L-seryl-[protein] + ADP + H(+). The enzyme catalyses L-threonyl-[protein] + ATP = O-phospho-L-threonyl-[protein] + ADP + H(+). Activated by RHOA binding. Inhibited by Y-27632. Protein kinase which is a key regulator of actin cytoskeleton and cell polarity. Involved in regulation of smooth muscle contraction, actin cytoskeleton organization, stress fiber and focal adhesion formation, neurite retraction, cell adhesion and motility via phosphorylation of DAPK3, GFAP, LIMK1, LIMK2, MYL9/MLC2, TPPP, PFN1 and PPP1R12A. Phosphorylates FHOD1 and acts synergistically with it to promote SRC-dependent non-apoptotic plasma membrane blebbing. Phosphorylates JIP3 and regulates the recruitment of JNK to JIP3 upon UVB-induced stress. Acts as a suppressor of inflammatory cell migration by regulating PTEN phosphorylation and stability. Acts as a negative regulator of VEGF-induced angiogenic endothelial cell activation. Required for centrosome positioning and centrosome-dependent exit from mitosis. Plays a role in terminal erythroid differentiation. May regulate closure of the eyelids and ventral body wall by inducing the assembly of actomyosin bundles. Promotes keratinocyte terminal differentiation. Involved in osteoblast compaction through the fibronectin fibrillogenesis cell-mediated matrix assembly process, essential for osteoblast mineralization. In Pan troglodytes (Chimpanzee), this protein is Rho-associated protein kinase 1 (ROCK1).